A 486-amino-acid polypeptide reads, in one-letter code: NADH-quinone oxidoreductase subunit N (486 aa).

The next 13 helical transmembrane spans lie at 5–25, 41–61, 77–97, 118–138, 165–185, 209–229, 245–265, 275–295, 304–324, 335–355, 380–400, 413–433, and 458–478; these read IGLS…ASLL, LITL…LVVF, GVTQ…MVMM, SAVG…FIGL, YFIL…FIFG, FLFG…IAPF, TAFM…RIIA, LFDI…AAAI, IAYS…TAGV, VIFY…IAAM, ALCL…LGFF, GLLW…YYYL, and VTAV…GPIF.

Belongs to the complex I subunit 2 family. As to quaternary structure, NDH-1 is composed of 14 different subunits. Subunits NuoA, H, J, K, L, M, N constitute the membrane sector of the complex.

Its subcellular location is the cell inner membrane. The catalysed reaction is a quinone + NADH + 5 H(+)(in) = a quinol + NAD(+) + 4 H(+)(out). NDH-1 shuttles electrons from NADH, via FMN and iron-sulfur (Fe-S) centers, to quinones in the respiratory chain. The immediate electron acceptor for the enzyme in this species is believed to be ubiquinone. Couples the redox reaction to proton translocation (for every two electrons transferred, four hydrogen ions are translocated across the cytoplasmic membrane), and thus conserves the redox energy in a proton gradient. The chain is NADH-quinone oxidoreductase subunit N from Bdellovibrio bacteriovorus (strain ATCC 15356 / DSM 50701 / NCIMB 9529 / HD100).